Reading from the N-terminus, the 312-residue chain is Small ribosomal subunit protein RACK1 (312 aa).

7 WD repeats span residues 9 to 42 (GHRG…ISWK), 63 to 93 (GHTG…RMWD), 105 to 135 (KHTK…RVWN), 148 to 180 (GHED…KVWN), 192 to 222 (GHSN…LLWD), 233 to 262 (NVES…SVYD), and 279 to 307 (PSEC…RVWS).

This sequence belongs to the WD repeat G protein beta family. Ribosomal protein RACK1 subfamily.

This chain is Small ribosomal subunit protein RACK1, found in Leishmania chagasi.